The chain runs to 680 residues: Zinc finger protein OBI1 (680 aa).

One can recognise a KRAB domain in the interval 16–87; it reads VSFEDVAVDF…AEATEQCLPG (72 aa). Residues 263-280 form a C2H2-type 1; degenerate zinc finger; the sequence is CHKIFPNKTELSNHDAMH. 8 consecutive C2H2-type zinc fingers follow at residues 455–477, 483–505, 511–533, 539–561, 567–589, 595–617, 623–645, and 651–673; these read FRCN…QRMH, HECK…QGIH, YECN…ERTH, FECK…QKIH, HKCK…QKTH, YECK…ETTH, and YECK…QVIH.

Polyubiquitinated, leading to its degradation via the ubiquitin-proteasome pathway. In terms of tissue distribution, expressed during osteogenic differentiation where levels increase from the first days of differentiation and remain high during the whole process. Highly expressed in lung.

It localises to the nucleus. Functionally, may modulate osteogenic differentiation, at least in part, through the bone morphogenetic protein (BMP) signaling pathway, increasing RUNX2 activation and leading to osteoblast commitment and maturation. This Mus musculus (Mouse) protein is Zinc finger protein OBI1 (ObI1).